The following is a 56-amino-acid chain: MAVQQNKKSRSKRGMRRSHDSLSTAQLSVDATSGELHRRHNVTADGFYRGVKVINK.

The interval 1-38 (MAVQQNKKSRSKRGMRRSHDSLSTAQLSVDATSGELHR) is disordered. Positions 7-16 (KKSRSKRGMR) are enriched in basic residues. Over residues 21 to 31 (SLSTAQLSVDA) the composition is skewed to polar residues.

The protein belongs to the bacterial ribosomal protein bL32 family.

This is Large ribosomal subunit protein bL32 from Shewanella woodyi (strain ATCC 51908 / MS32).